Reading from the N-terminus, the 285-residue chain is ATP synthase gamma chain (285 aa).

Belongs to the ATPase gamma chain family. In terms of assembly, F-type ATPases have 2 components, CF(1) - the catalytic core - and CF(0) - the membrane proton channel. CF(1) has five subunits: alpha(3), beta(3), gamma(1), delta(1), epsilon(1). CF(0) has three main subunits: a, b and c.

Its subcellular location is the cell membrane. Functionally, produces ATP from ADP in the presence of a proton gradient across the membrane. The gamma chain is believed to be important in regulating ATPase activity and the flow of protons through the CF(0) complex. This is ATP synthase gamma chain from Geobacillus kaustophilus (strain HTA426).